Reading from the N-terminus, the 310-residue chain is Calcium homeostasis modulator protein 5 (310 aa).

4 helical membrane passes run 17–37 (TIGYSVMAILTIGSERIFSMV), 49–69 (FPYGICFLLGPAVVLLVVGFF), 101–121 (LIKVLYGACVAPVMWLTVALL), and 181–201 (QILGWSVIITAVVIALIGTCY).

It belongs to the CALHM family.

The protein resides in the membrane. Functionally, pore-forming subunit of a voltage-gated ion channel. The chain is Calcium homeostasis modulator protein 5 (calhm5.1) from Danio rerio (Zebrafish).